The following is a 94-amino-acid chain: Large ribosomal subunit protein bL27 (94 aa).

Positions 1–9 are excised as a propeptide; it reads MLKLNLQFF.

This sequence belongs to the bacterial ribosomal protein bL27 family. In terms of processing, the N-terminus is cleaved by ribosomal processing cysteine protease Prp.

In Staphylococcus epidermidis (strain ATCC 35984 / DSM 28319 / BCRC 17069 / CCUG 31568 / BM 3577 / RP62A), this protein is Large ribosomal subunit protein bL27.